The following is an 85-amino-acid chain: UPF0297 protein lhv_0439 (85 aa).

Belongs to the UPF0297 family.

This chain is UPF0297 protein lhv_0439, found in Lactobacillus helveticus (strain DPC 4571).